A 178-amino-acid polypeptide reads, in one-letter code: Protein FLOWERING LOCUS T 1 (178 aa).

The protein belongs to the phosphatidylethanolamine-binding protein family. Expressed in leaves but not in shoot apex.

Its function is as follows. Involved in the regulation of vernalization and of flowering time. This Brachypodium distachyon (Purple false brome) protein is Protein FLOWERING LOCUS T 1.